Here is a 220-residue protein sequence, read N- to C-terminus: Large ribosomal subunit protein uL16z (220 aa).

This sequence belongs to the universal ribosomal protein uL16 family. Component of the small ribosomal subunit. Mature ribosomes consist of a small (40S) and a large (60S) subunit. The 40S subunit contains about 33 different proteins and 1 molecule of RNA (18S). The 60S subunit contains about 49 different proteins and 3 molecules of RNA (25S, 5.8S and 5S). Interacts with NIK1. Interacts with LIMYB. Phosphorylated by NIK1 and NIK2 in vitro. As to expression, ubiquitous, with the highest expression in flowers. Expressed in seedlings, leaves, roots, stems and flowers. Expressed in young leaves, mostly in dividing cells and in the hydathodes, in the root tips and lateral root primordia, in pistils, anthers, and pollen grains, and in developing seeds.

The protein resides in the cytoplasm. Its subcellular location is the nucleus. In terms of biological role, ribosomal protein involved in translational regulation. Contribute to general translation under UV-B stress. Involved in the NIK1-mediated defense response to geminivirus infection. Acts coordinately with LIMYB as a transcriptional repressor. The sequence is that of Large ribosomal subunit protein uL16z from Arabidopsis thaliana (Mouse-ear cress).